Here is a 70-residue protein sequence, read N- to C-terminus: DNA-directed RNA polymerase subunit omega (70 aa).

Belongs to the RNA polymerase subunit omega family. As to quaternary structure, the RNAP catalytic core consists of 2 alpha, 1 beta, 1 beta' and 1 omega subunit. When a sigma factor is associated with the core the holoenzyme is formed, which can initiate transcription.

The catalysed reaction is RNA(n) + a ribonucleoside 5'-triphosphate = RNA(n+1) + diphosphate. In terms of biological role, promotes RNA polymerase assembly. Latches the N- and C-terminal regions of the beta' subunit thereby facilitating its interaction with the beta and alpha subunits. This chain is DNA-directed RNA polymerase subunit omega, found in Bacillus cytotoxicus (strain DSM 22905 / CIP 110041 / 391-98 / NVH 391-98).